We begin with the raw amino-acid sequence, 162 residues long: Caveolin-2 (162 aa).

Topologically, residues 1–86 are cytoplasmic; sequence MGLETEKADV…FEISKYVMYK (86 aa). Tyr19 carries the phosphotyrosine; by SRC modification. The residue at position 20 (Ser20) is a Phosphoserine. Tyr27 is subject to Phosphotyrosine; by SRC. At Ser36 the chain carries Phosphoserine. Positions 87 to 107 form an intramembrane region, helical; sequence FLTVFLAIPLAFAAGILFATL. Residues 108-162 lie on the Cytoplasmic side of the membrane; sequence SCLHIWIIMPFVKTCLMVLPSVQTIWKSVTDVIIAPLCTSVGRSLSSISLQLSHD.

It belongs to the caveolin family. As to quaternary structure, monomer or homodimer. Interacts with CAV1; the interaction forms a stable heterooligomeric complex that is required for targeting to lipid rafts and for caveolae formation. Tyrosine phosphorylated forms do not form heterooligomers with the Tyr-19-phosphorylated form existing as a monomer or dimer, and the Tyr-27-form as a monomer only. Interacts (tyrosine phosphorylated form) with the SH2 domain-containing proteins, RASA1, NCK1 and SRC. Interacts (tyrosine phosphorylated form) with INSR, the interaction (Tyr-27-phosphorylated form) is increased on insulin stimulation. Interacts (Tyr-19 phosphorylated form) with MAPK1 (phosphorylated form); the interaction, promoted by insulin, leads to nuclear location and MAPK1 activation. Interacts with STAT3; the interaction is increased on insulin-induced tyrosine phosphorylation leading to STAT activation. Phosphorylated on serine and tyrosine residues. Phosphorylation on Ser-36 appears to modulate mitosis in endothelial cells. Phosphorylation on both Tyr-19 and Tyr-27 is required for insulin-induced 'Ser-727' phosphorylation of STAT3 and its activation. Phosphorylation on Tyr-19 is required for insulin-induced phosphorylation of MAPK1 and DNA binding of STAT3. Tyrosine phosphorylation is induced by both EGF and insulin.

The protein resides in the nucleus. It localises to the cytoplasm. The protein localises to the golgi apparatus membrane. It is found in the cell membrane. Its subcellular location is the membrane. The protein resides in the caveola. Its function is as follows. May act as a scaffolding protein within caveolar membranes. Interacts directly with G-protein alpha subunits and can functionally regulate their activity. Acts as an accessory protein in conjunction with CAV1 in targeting to lipid rafts and driving caveolae formation. The Ser-36 phosphorylated form has a role in modulating mitosis in endothelial cells. Positive regulator of cellular mitogenesis of the MAPK signaling pathway. Required for the insulin-stimulated nuclear translocation and activation of MAPK1 and STAT3, and the subsequent regulation of cell cycle progression. This Eulemur macaco macaco (Black lemur) protein is Caveolin-2 (CAV2).